Consider the following 210-residue polypeptide: Small ribosomal subunit protein uS3 (210 aa).

Residues 38–106 form the KH type-2 domain; it reads LKSFLKKRLY…EVYLNIQEVR (69 aa).

The protein belongs to the universal ribosomal protein uS3 family. Part of the 30S ribosomal subunit. Forms a tight complex with proteins S10 and S14.

Its function is as follows. Binds the lower part of the 30S subunit head. Binds mRNA in the 70S ribosome, positioning it for translation. The sequence is that of Small ribosomal subunit protein uS3 from Geotalea daltonii (strain DSM 22248 / JCM 15807 / FRC-32) (Geobacter daltonii).